Consider the following 602-residue polypeptide: MFS-type efflux transporter pyiT (602 aa).

Residues 1–33 are disordered; it reads MEKAKDSLPTTGDPVPSQGTINPVDETGGSASD. The next 7 helical transmembrane spans lie at 43-63, 123-143, 156-176, 185-205, 212-232, 251-271, and 282-302; these read FWFT…EGSV, WLTI…GGAT, GLGS…LLPL, IIFM…GILV, WVFY…FFFL, FFGN…LTYG, and IIVS…FEAS. Residue asparagine 317 is glycosylated (N-linked (GlcNAc...) asparagine). The next 6 membrane-spanning stretches (helical) occupy residues 325 to 345, 357 to 377, 386 to 406, 410 to 430, 451 to 471, and 524 to 544; these read IATF…PLYF, GVML…GGAL, NIHF…TILN, SLAV…VPTA, TFAF…AAIF, and LERV…VIFL. Residues 564 to 585 show a composition bias toward polar residues; that stretch reads IPQTAADNSASRPNTINDTASQ. Residues 564-602 form a disordered region; sequence IPQTAADNSASRPNTINDTASQAPILKQRRSTNQERETV. The N-linked (GlcNAc...) asparagine glycan is linked to asparagine 580.

This sequence belongs to the major facilitator superfamily.

It is found in the cell membrane. MFS-type efflux transporter; part of the gene cluster that mediates the biosynthesis of the mycotoxin pyrichalasin H, a tyrosine-derived cytochalasan that inhibits the growth of rice seedlings, but also inhibits lymphocyte capping and actin polymerization and alters cell morphology. Pyrichalasin H is indicated as the responsible agent for the genus-specific pathogenicity of M.grisea toward crabgrass. PyiT might be involved in the excretion of pyrichalasin H. The polypeptide is MFS-type efflux transporter pyiT (Pyricularia grisea (Crabgrass-specific blast fungus)).